The sequence spans 584 residues: BEL1-like homeodomain protein 8 (584 aa).

The SR/KY domain stretch occupies residues 266 to 282; it reads SRFLEPAQKMLEEFCIS. The tract at residues 292 to 317 is disordered; the sequence is ESTSMEDDDDDDDNLSGFSSSSEPLE. The segment covering 295–305 has biased composition (acidic residues); it reads SMEDDDDDDDN. The segment at 316 to 387 is BELL domain; the sequence is LEPKNRLKKA…ALRTAIAEHV (72 aa). The homeobox DNA-binding region spans 424-486; the sequence is IWRPQRGLPE…NARVRLWKPM (63 aa). The disordered stretch occupies residues 503-529; sequence TSHNIEPSNRPNTVSSPSHEQTLTGLS.

Belongs to the TALE/BELL homeobox family. As to quaternary structure, may form heterodimeric complex with the TALE/KNOX proteins STM and KNAT1/BP.

It is found in the nucleus. Its function is as follows. Required for specifying floral primordia and establishing early internode patterning events during inflorescence development. This chain is BEL1-like homeodomain protein 8 (BLH8), found in Arabidopsis thaliana (Mouse-ear cress).